Reading from the N-terminus, the 538-residue chain is Putative outer membrane porin BglH (538 aa).

The first 25 residues, Met1 to Ala25, serve as a signal peptide directing secretion.

It belongs to the porin LamB (TC 1.B.3) family.

The protein resides in the cell outer membrane. May be a sugar porin with a broad carbohydrate specificity. The protein is Putative outer membrane porin BglH (bglH) of Escherichia coli (strain UTI89 / UPEC).